Reading from the N-terminus, the 475-residue chain is ATP synthase subunit beta, chloroplastic (475 aa).

155–162 serves as a coordination point for ATP; it reads GGAGVGKT.

It belongs to the ATPase alpha/beta chains family. As to quaternary structure, F-type ATPases have 2 components, CF(1) - the catalytic core - and CF(0) - the membrane proton channel. CF(1) has five subunits: alpha(3), beta(3), gamma(1), delta(1), epsilon(1). CF(0) has four main subunits: a(1), b(1), b'(1) and c(9-12).

It is found in the plastid. Its subcellular location is the chloroplast thylakoid membrane. The catalysed reaction is ATP + H2O + 4 H(+)(in) = ADP + phosphate + 5 H(+)(out). Its function is as follows. Produces ATP from ADP in the presence of a proton gradient across the membrane. The catalytic sites are hosted primarily by the beta subunits. The protein is ATP synthase subunit beta, chloroplastic of Guillardia theta (Cryptophyte).